We begin with the raw amino-acid sequence, 588 residues long: Sperm-associated microtubule inner protein 4 (588 aa).

Position 219 is a phosphothreonine (threonine 219). 3 positions are modified to phosphoserine: serine 406, serine 421, and serine 427. Tyrosine 441 bears the Phosphotyrosine mark. Residues serine 457, serine 484, and serine 516 each carry the phosphoserine modification.

As to expression, predominantly expressed in the testes.

It localises to the cytoplasm. It is found in the cytoskeleton. The protein localises to the microtubule organizing center. Its subcellular location is the centrosome. The protein resides in the flagellum axoneme. Functionally, microtubule inner protein (MIP) part of the dynein-decorated doublet microtubules (DMTs) in flagellum axoneme. May serve to reinforce and thus stabilize the microtubule structure in the sperm flagella. This Mus musculus (Mouse) protein is Sperm-associated microtubule inner protein 4 (Spmip4).